We begin with the raw amino-acid sequence, 262 residues long: Inner membrane protein YcfZ (262 aa).

The Cytoplasmic segment spans residues 1–4; that stretch reads MKKF. The helical transmembrane segment at 5 to 27 threads the bilayer; the sequence is IILLSLLILLPLTAASKPLIPIM. The Periplasmic segment spans residues 28–182; it reads KTLFTDVTGT…HENAPPGSTN (155 aa). The helical transmembrane segment at 183–202 threads the bilayer; sequence TLGFIAWAATFILFSRIFYY. Residues 203-206 are Cytoplasmic-facing; that stretch reads TTRF. Residues 207-229 form a helical membrane-spanning segment; that stretch reads IYALKFAVAMTIANMGYQALCLY. The Periplasmic portion of the chain corresponds to 230-238; it reads IDNSFAITR. Residues 239-258 traverse the membrane as a helical segment; that stretch reads ISPLWAGLIGVCTFIAALLL. The Cytoplasmic portion of the chain corresponds to 259-262; the sequence is TSKR.

It is found in the cell inner membrane. This Escherichia coli (strain K12) protein is Inner membrane protein YcfZ (ycfZ).